The following is a 1430-amino-acid chain: Bromodomain-containing protein homolog (1430 aa).

The C2H2-type zinc-finger motif lies at 23-49 (FACPVRGCDRSYKTIMGLQYHLMKYDH). The tract at residues 51-111 (NPQPLTPVLT…AGGGSASGVS (61 aa)) is disordered. Over residues 62–81 (SRKKARSRSGGHHSTPRPHK) the composition is skewed to basic residues. Residues 283-333 (DAVCCICLDGECQNTNVILFCDMCNLAVHQDCYGVPYIPEGQWLCRRCLQS) form a PHD-type 1 zinc finger. Zn(2+) is bound by residues Cys-286, Cys-289, Cys-303, Cys-306, His-311, Cys-314, Cys-327, and Cys-330. Residues 337–370 (PVNCVLCPNAGGAFKQTDHGQWAHVVCALWIPEV) form a C2HC pre-PHD-type zinc finger. A PHD-type 2 zinc finger spans residues 394-457 (LTCYVCKEKG…QKFAYCHAHT (64 aa)). The 105-residue stretch at 611–715 (LQLNPLEAAL…DQAAPLFVQV (105 aa)) folds into the Bromo domain. Over residues 796–805 (KARFAARHSS) the composition is skewed to basic residues. Disordered regions lie at residues 796 to 887 (KARF…SSPV), 901 to 942 (AQAA…TTAA), 1012 to 1054 (ANLP…QALP), and 1076 to 1301 (QRDV…GQKP). The segment covering 842–857 (HDDDDEEEDSDEDSMG) has biased composition (acidic residues). A compositionally biased stretch (polar residues) spans 865 to 887 (LLNSTQTPPCSPIKSLNNSSSPV). Composition is skewed to low complexity over residues 922–942 (NSQSSNTQSTSGSSSSVTTAA), 1034–1043 (SSSMSPKKSP), and 1085–1107 (APSQSSSPCSSCSDFSMSGSCSD). Residues 1108–1120 (FDSDEASEGDADG) are compositionally biased toward acidic residues. Positions 1121-1137 (DPDRDGGRSRSEERDST) are enriched in basic and acidic residues. Composition is skewed to polar residues over residues 1151-1165 (ASLNNVQGNNGNMAI) and 1265-1278 (NTTAAGSAPLTNNN). The segment covering 1281-1293 (KHSEDSASSERHN) has biased composition (basic and acidic residues). The 74-residue stretch at 1305-1378 (PLQLVWAKCR…TWQWLPANKL (74 aa)) folds into the PWWP domain.

Component of the Enok complex composed of at least Br140, enok, Eaf6 and Ing5. As part of the Enok complex, interacts with elg1 and the Elg1 RFC-like complex.

It localises to the nucleus. Scaffold subunit of the histone acetyltransferase (HAT) Enok complex which has histone H3 acetyltransferase activity. As part of the Enok complex, associates with the Elg1 RFC-like complex and down-regulates its PCNA-unloading function to promote the G1/S transition. May also play a role in maintaining the protein levels and stability of enok. The chain is Bromodomain-containing protein homolog from Drosophila melanogaster (Fruit fly).